The primary structure comprises 134 residues: UPF0412 protein YaaI (134 aa).

The N-terminal stretch at 1–23 (MRSVLTISASLLFGLALSSVAHA) is a signal peptide.

It belongs to the UPF0412 family.

In Salmonella paratyphi B (strain ATCC BAA-1250 / SPB7), this protein is UPF0412 protein YaaI.